The chain runs to 165 residues: Nucleotide-binding protein CHY_1197 (165 aa).

The protein belongs to the YajQ family.

In terms of biological role, nucleotide-binding protein. The chain is Nucleotide-binding protein CHY_1197 from Carboxydothermus hydrogenoformans (strain ATCC BAA-161 / DSM 6008 / Z-2901).